A 332-amino-acid polypeptide reads, in one-letter code: MTLITPPFPTNRLRRMRRTEALRDLAQENRLSVKDLIWPIFITDVPGADVEISSMPGVVRRTMDGALKAAEGSRDAGHSRDLPVPLTDPAVKTETCEMAWQPDNFTNRVIAAMKQAVPEVAIMTDIALDPYNANGHDGLVRDGILLNDETTEALVKMALAQAAAGADILGPSDMMDGRVGAIRQAMEAAGHKDIAILSYAAKYASAFYGPFRDAVGASSALKGDKKTYQMNPANSAEALRNVARDIAEGADMVMVKPGMPYLDIVRQVKDAFGMPTYAYQVSGEYAMLMAAVQNGWLNHDKVMLESLMAFRRAGCDGVLTYFAPAAAKLIGA.

The active-site Schiff-base intermediate with substrate is the Lys202. Residues Arg212 and Lys225 each contribute to the 5-aminolevulinate site. Lys256 serves as the catalytic Schiff-base intermediate with substrate. The 5-aminolevulinate site is built by Ser282 and Tyr321.

Belongs to the ALAD family. As to quaternary structure, homohexamer.

It carries out the reaction 2 5-aminolevulinate = porphobilinogen + 2 H2O + H(+). It functions in the pathway porphyrin-containing compound metabolism; protoporphyrin-IX biosynthesis; coproporphyrinogen-III from 5-aminolevulinate: step 1/4. Its function is as follows. Catalyzes an early step in the biosynthesis of tetrapyrroles. Binds two molecules of 5-aminolevulinate per subunit, each at a distinct site, and catalyzes their condensation to form porphobilinogen. The polypeptide is Delta-aminolevulinic acid dehydratase (hemB) (Rhodobacter capsulatus (Rhodopseudomonas capsulata)).